The primary structure comprises 357 residues: Peptide chain release factor 1 (357 aa).

Gln235 carries the post-translational modification N5-methylglutamine. The disordered stretch occupies residues 285 to 305; the sequence is KRHNEASAMRSAQVGSGDRSE.

Belongs to the prokaryotic/mitochondrial release factor family. Post-translationally, methylated by PrmC. Methylation increases the termination efficiency of RF1.

Its subcellular location is the cytoplasm. Its function is as follows. Peptide chain release factor 1 directs the termination of translation in response to the peptide chain termination codons UAG and UAA. In Chlamydia pneumoniae (Chlamydophila pneumoniae), this protein is Peptide chain release factor 1 (prfA).